A 606-amino-acid polypeptide reads, in one-letter code: uncharacterized protein (606 aa).

This is an uncharacterized protein from Sinorhizobium fredii (strain NBRC 101917 / NGR234).